Reading from the N-terminus, the 413-residue chain is Arginine biosynthesis bifunctional protein ArgJ (413 aa).

Substrate contacts are provided by Thr158, Lys184, Thr195, Glu285, Asn408, and Ser413. Thr195 (nucleophile) is an active-site residue.

It belongs to the ArgJ family. As to quaternary structure, heterotetramer of two alpha and two beta chains.

It is found in the cytoplasm. It catalyses the reaction N(2)-acetyl-L-ornithine + L-glutamate = N-acetyl-L-glutamate + L-ornithine. The enzyme catalyses L-glutamate + acetyl-CoA = N-acetyl-L-glutamate + CoA + H(+). It functions in the pathway amino-acid biosynthesis; L-arginine biosynthesis; L-ornithine and N-acetyl-L-glutamate from L-glutamate and N(2)-acetyl-L-ornithine (cyclic): step 1/1. Its pathway is amino-acid biosynthesis; L-arginine biosynthesis; N(2)-acetyl-L-ornithine from L-glutamate: step 1/4. Its function is as follows. Catalyzes two activities which are involved in the cyclic version of arginine biosynthesis: the synthesis of N-acetylglutamate from glutamate and acetyl-CoA as the acetyl donor, and of ornithine by transacetylation between N(2)-acetylornithine and glutamate. In Mesorhizobium japonicum (strain LMG 29417 / CECT 9101 / MAFF 303099) (Mesorhizobium loti (strain MAFF 303099)), this protein is Arginine biosynthesis bifunctional protein ArgJ.